The primary structure comprises 330 residues: Phosphate acyltransferase (330 aa).

This sequence belongs to the PlsX family. In terms of assembly, homodimer. Probably interacts with PlsY.

The protein localises to the cytoplasm. It carries out the reaction a fatty acyl-[ACP] + phosphate = an acyl phosphate + holo-[ACP]. Its pathway is lipid metabolism; phospholipid metabolism. Its function is as follows. Catalyzes the reversible formation of acyl-phosphate (acyl-PO(4)) from acyl-[acyl-carrier-protein] (acyl-ACP). This enzyme utilizes acyl-ACP as fatty acyl donor, but not acyl-CoA. The sequence is that of Phosphate acyltransferase from Streptococcus pneumoniae (strain P1031).